The sequence spans 352 residues: Alanine racemase (352 aa).

Catalysis depends on Lys-33, which acts as the Proton acceptor; specific for D-alanine. N6-(pyridoxal phosphate)lysine is present on Lys-33. Arg-129 contacts substrate. Tyr-250 acts as the Proton acceptor; specific for L-alanine in catalysis. Met-298 serves as a coordination point for substrate.

The protein belongs to the alanine racemase family. Pyridoxal 5'-phosphate serves as cofactor.

It carries out the reaction L-alanine = D-alanine. It participates in amino-acid biosynthesis; D-alanine biosynthesis; D-alanine from L-alanine: step 1/1. Catalyzes the interconversion of L-alanine and D-alanine. May also act on other amino acids. The chain is Alanine racemase (alr) from Neisseria meningitidis serogroup B (strain ATCC BAA-335 / MC58).